A 323-amino-acid polypeptide reads, in one-letter code: tRNA(Ile)-lysidine synthase (323 aa).

33 to 38 is an ATP binding site; it reads SGGSDS.

This sequence belongs to the tRNA(Ile)-lysidine synthase family.

It localises to the cytoplasm. It catalyses the reaction cytidine(34) in tRNA(Ile2) + L-lysine + ATP = lysidine(34) in tRNA(Ile2) + AMP + diphosphate + H(+). Ligates lysine onto the cytidine present at position 34 of the AUA codon-specific tRNA(Ile) that contains the anticodon CAU, in an ATP-dependent manner. Cytidine is converted to lysidine, thus changing the amino acid specificity of the tRNA from methionine to isoleucine. The polypeptide is tRNA(Ile)-lysidine synthase (Mycobacterium leprae (strain TN)).